A 541-amino-acid chain; its full sequence is Tegument protein UL21 homolog (541 aa).

It belongs to the alphaherpesvirinae UL21 protein family. As to quaternary structure, interacts (via C-terminus) with UL16.

Its subcellular location is the virion tegument. The protein localises to the host cytoplasm. The protein resides in the host nucleus. In terms of biological role, may participate in DNA packaging/capsid maturation events. Promotes efficient incorporation of tegument proteins UL46, UL49, and US3 homologs into virions. May also play a role in capsid transport to the trans-Golgi network (TGN). The polypeptide is Tegument protein UL21 homolog (Homo sapiens (Human)).